A 484-amino-acid chain; its full sequence is ATP-dependent rRNA helicase RRP3 (484 aa).

The segment covering 1 to 10 (MAIVGSNSVS) has biased composition (polar residues). A disordered region spans residues 1 to 61 (MAIVGSNSVS…SSQKSKNIVE (61 aa)). The span at 18–54 (RNDARDLAEKIKRNALKKQEQDKKQQLEEESKPESSQ) shows a compositional bias: basic and acidic residues. A Q motif motif is present at residues 71 to 99 (STFSELKLVPELLEAIQQMKFSKPTPIQS). The Helicase ATP-binding domain occupies 102-273 (IPHALEGKDI…RASLHNPVRV (172 aa)). 115–122 (AQTGSGKT) contributes to the ATP binding site. The DEAD box signature appears at 221-224 (DEAD). Residues 300–444 (YLIHLLNEFV…KDPSPPKAML (145 aa)) form the Helicase C-terminal domain. Residues 460-484 (RQTKEFHEKTRRGRRGKDDKDREEH) form a disordered region. Over residues 475–484 (GKDDKDREEH) the composition is skewed to basic and acidic residues.

The protein belongs to the DEAD box helicase family. DDX47/RRP3 subfamily. In terms of assembly, interacts with the SSU processome.

Its subcellular location is the nucleus. The catalysed reaction is ATP + H2O = ADP + phosphate + H(+). In terms of biological role, ATP-dependent rRNA helicase required for pre-ribosomal RNA processing. Involved in the maturation of the 35S-pre-rRNA and to its cleavage to mature 18S rRNA. In Scheffersomyces stipitis (strain ATCC 58785 / CBS 6054 / NBRC 10063 / NRRL Y-11545) (Yeast), this protein is ATP-dependent rRNA helicase RRP3.